We begin with the raw amino-acid sequence, 130 residues long: Small ribosomal subunit protein uS8 (130 aa).

Belongs to the universal ribosomal protein uS8 family.

This Agaricus bisporus (White button mushroom) protein is Small ribosomal subunit protein uS8 (rps22).